The chain runs to 179 residues: tRNA (cytidine(56)-2'-O)-methyltransferase (179 aa).

S-adenosyl-L-methionine is bound by residues Leu82, 110 to 114 (GAEKV), and 128 to 135 (VGNQPHSE).

This sequence belongs to the aTrm56 family. In terms of assembly, homodimer.

It is found in the cytoplasm. It carries out the reaction cytidine(56) in tRNA + S-adenosyl-L-methionine = 2'-O-methylcytidine(56) in tRNA + S-adenosyl-L-homocysteine + H(+). Specifically catalyzes the AdoMet-dependent 2'-O-ribose methylation of cytidine at position 56 in tRNAs. The sequence is that of tRNA (cytidine(56)-2'-O)-methyltransferase from Methanocaldococcus jannaschii (strain ATCC 43067 / DSM 2661 / JAL-1 / JCM 10045 / NBRC 100440) (Methanococcus jannaschii).